The following is a 668-amino-acid chain: Probable serine/threonine-protein kinase abkB (668 aa).

Disordered stretches follow at residues 88–111 and 132–162; these read YTNI…KTTA and EVEE…DDNK. Residues 91–105 show a composition bias toward polar residues; sequence IGGTSPNRQSVPENS. Positions 131-163 form a coiled coil; it reads KEVEEEIIDKNERGKEQEQENKQQKEQKDDNKS. The span at 138–162 shows a compositional bias: basic and acidic residues; sequence IDKNERGKEQEQENKQQKEQKDDNK. In terms of domain architecture, Protein kinase spans 314 to 668; the sequence is DFERLPINSA…EIPSTYHHHH (355 aa). ATP-binding positions include 320-328 and K346; that span reads INSASLAQV. D478 serves as the catalytic Proton acceptor.

Belongs to the protein kinase superfamily. ADCK protein kinase family.

This is Probable serine/threonine-protein kinase abkB (abkB) from Dictyostelium discoideum (Social amoeba).